The following is a 236-amino-acid chain: Thiamine import ATP-binding protein ThiQ (236 aa).

Positions 2 to 230 (LKLEKITYLY…SAAKASVLGI (229 aa)) constitute an ABC transporter domain. An ATP-binding site is contributed by 32 to 39 (GPSGAGKS).

This sequence belongs to the ABC transporter superfamily. Thiamine importer (TC 3.A.1.19.1) family. In terms of assembly, the complex is composed of two ATP-binding proteins (ThiQ), two transmembrane proteins (ThiP) and a solute-binding protein (ThiB).

Its subcellular location is the cell inner membrane. The catalysed reaction is thiamine(out) + ATP + H2O = thiamine(in) + ADP + phosphate + H(+). Functionally, part of the ABC transporter complex ThiBPQ involved in thiamine import. Responsible for energy coupling to the transport system. In Yersinia pseudotuberculosis serotype I (strain IP32953), this protein is Thiamine import ATP-binding protein ThiQ.